The chain runs to 153 residues: 17.6 kDa class I heat shock protein (153 aa).

Residues 38-153 (ETAAIVNARI…PMVKAIDISG (116 aa)) form the sHSP domain.

This sequence belongs to the small heat shock protein (HSP20) family. Forms oligomeric structures.

The protein resides in the cytoplasm. The protein is 17.6 kDa class I heat shock protein (HSP17.6) of Helianthus annuus (Common sunflower).